The primary structure comprises 178 residues: Transcription factor E (178 aa).

Residues 5 to 89 (AEELILSLAK…YWKVNIDQIN (85 aa)) form the HTH TFE/IIEalpha-type domain.

The protein belongs to the TFE family. As to quaternary structure, monomer. Interaction with RNA polymerase subunits RpoF and RpoE is necessary for Tfe stimulatory transcription activity. Able to interact with Tbp and RNA polymerase in the absence of DNA promoter. Interacts both with the preinitiation and elongation complexes.

Functionally, transcription factor that plays a role in the activation of archaeal genes transcribed by RNA polymerase. Facilitates transcription initiation by enhancing TATA-box recognition by TATA-box-binding protein (Tbp), and transcription factor B (Tfb) and RNA polymerase recruitment. Not absolutely required for transcription in vitro, but particularly important in cases where Tbp or Tfb function is not optimal. It dynamically alters the nucleic acid-binding properties of RNA polymerases by stabilizing the initiation complex and destabilizing elongation complexes. Seems to translocate with the RNA polymerase following initiation and acts by binding to the non template strand of the transcription bubble in elongation complexes. The protein is Transcription factor E of Sulfurisphaera tokodaii (strain DSM 16993 / JCM 10545 / NBRC 100140 / 7) (Sulfolobus tokodaii).